The following is a 474-amino-acid chain: Kynureninase 2 (474 aa).

Residues Leu-144, Thr-145, 172-175, Asp-258, His-261, and Tyr-283 each bind pyridoxal 5'-phosphate; that span reads FPSD. Lys-284 bears the N6-(pyridoxal phosphate)lysine mark. Positions 323 and 351 each coordinate pyridoxal 5'-phosphate.

The protein belongs to the kynureninase family. In terms of assembly, homodimer. Pyridoxal 5'-phosphate serves as cofactor.

It localises to the cytoplasm. The catalysed reaction is L-kynurenine + H2O = anthranilate + L-alanine + H(+). It catalyses the reaction 3-hydroxy-L-kynurenine + H2O = 3-hydroxyanthranilate + L-alanine + H(+). It functions in the pathway amino-acid degradation; L-kynurenine degradation; L-alanine and anthranilate from L-kynurenine: step 1/1. Its pathway is cofactor biosynthesis; NAD(+) biosynthesis; quinolinate from L-kynurenine: step 2/3. In terms of biological role, catalyzes the cleavage of L-kynurenine (L-Kyn) and L-3-hydroxykynurenine (L-3OHKyn) into anthranilic acid (AA) and 3-hydroxyanthranilic acid (3-OHAA), respectively. This Emericella nidulans (strain FGSC A4 / ATCC 38163 / CBS 112.46 / NRRL 194 / M139) (Aspergillus nidulans) protein is Kynureninase 2 (bna5-2).